A 361-amino-acid polypeptide reads, in one-letter code: Chorismate synthase (361 aa).

Residue Arg-48 coordinates NADP(+). Residues 126–128 (RFS), Gly-286, 301–305 (KPTPS), and Arg-328 contribute to the FMN site.

It belongs to the chorismate synthase family. It depends on FMNH2 as a cofactor.

It carries out the reaction 5-O-(1-carboxyvinyl)-3-phosphoshikimate = chorismate + phosphate. It participates in metabolic intermediate biosynthesis; chorismate biosynthesis; chorismate from D-erythrose 4-phosphate and phosphoenolpyruvate: step 7/7. Catalyzes the anti-1,4-elimination of the C-3 phosphate and the C-6 proR hydrogen from 5-enolpyruvylshikimate-3-phosphate (EPSP) to yield chorismate, which is the branch point compound that serves as the starting substrate for the three terminal pathways of aromatic amino acid biosynthesis. This reaction introduces a second double bond into the aromatic ring system. This chain is Chorismate synthase, found in Korarchaeum cryptofilum (strain OPF8).